A 257-amino-acid chain; its full sequence is Undecaprenyl-diphosphatase (257 aa).

The next 8 helical transmembrane spans lie at 4–24, 51–71, 78–98, 106–126, 133–153, 171–191, 207–227, and 235–255; these read LFKA…PISS, HVGT…NIFF, LFII…HDLI, LIIV…EKVG, ITLS…IPGV, AYAA…AAML, LFII…KFLL, and LNLF…LYFF.

This sequence belongs to the UppP family.

The protein localises to the cell inner membrane. The catalysed reaction is di-trans,octa-cis-undecaprenyl diphosphate + H2O = di-trans,octa-cis-undecaprenyl phosphate + phosphate + H(+). Catalyzes the dephosphorylation of undecaprenyl diphosphate (UPP). Confers resistance to bacitracin. This is Undecaprenyl-diphosphatase from Thermodesulfovibrio yellowstonii (strain ATCC 51303 / DSM 11347 / YP87).